Reading from the N-terminus, the 259-residue chain is 3-deoxy-manno-octulosonate cytidylyltransferase 1 (259 aa).

It belongs to the KdsB family.

Its subcellular location is the cytoplasm. The enzyme catalyses 3-deoxy-alpha-D-manno-oct-2-ulosonate + CTP = CMP-3-deoxy-beta-D-manno-octulosonate + diphosphate. The protein operates within nucleotide-sugar biosynthesis; CMP-3-deoxy-D-manno-octulosonate biosynthesis; CMP-3-deoxy-D-manno-octulosonate from 3-deoxy-D-manno-octulosonate and CTP: step 1/1. Its pathway is bacterial outer membrane biogenesis; lipopolysaccharide biosynthesis. Functionally, activates KDO (a required 8-carbon sugar) for incorporation into bacterial lipopolysaccharide in Gram-negative bacteria. The chain is 3-deoxy-manno-octulosonate cytidylyltransferase 1 from Hydrogenovibrio crunogenus (strain DSM 25203 / XCL-2) (Thiomicrospira crunogena).